Reading from the N-terminus, the 468-residue chain is Trehalose-2-sulfate acyltransferase PapA2 (468 aa).

Belongs to the PapA acyltransferase family.

The catalysed reaction is 2-O-sulfo-alpha,alpha-trehalose + hexadecanoyl-CoA = 2-O-sulfo-2'-O-hexadecanoyl-alpha,alpha-trehalose + CoA. Catalyzes the acylation of trehalose-2-sulfate by adding the palmitoyl group at the 2'-position to yield the intermediate trehalose-2-sulfate-2'-palmitate (SL659). The sequence is that of Trehalose-2-sulfate acyltransferase PapA2 (papA2) from Mycobacterium tuberculosis (strain ATCC 25177 / H37Ra).